The primary structure comprises 245 residues: Protein FAM133B (245 aa).

Disordered stretches follow at residues 19–38 (SRGP…NRPR) and 69–245 (WKKE…SDSP). Positions 69 to 80 (WKKELEKHREKL) are enriched in basic and acidic residues. Ser-82 carries the post-translational modification Phosphoserine. Basic residues predominate over residues 89-102 (KKRQKKKKEKKKSG). Residues 103–119 (RYSSSSSSSSDSSSSSS) are compositionally biased toward low complexity. Residues 128–140 (QTKRRKKKKSHCH) show a composition bias toward basic residues. The span at 165 to 176 (KDITEREKDTKG) shows a compositional bias: basic and acidic residues. Residues Ser-190, Ser-191, Ser-193, and Ser-195 each carry the phosphoserine modification. Residues 209–219 (SGEERERTTDK) show a composition bias toward basic and acidic residues. A compositionally biased stretch (basic residues) spans 220 to 237 (AKKRRKHKKHSKKKKKKA).

Belongs to the FAM133 family.

The chain is Protein FAM133B (Fam133b) from Rattus norvegicus (Rat).